Here is a 186-residue protein sequence, read N- to C-terminus: MKLIVGLGNYGSQYEATRHNAGWIALDQLIEKYGFTQQKNEHNSIIFFSTVNNEKVLFVKPQTYMNNSGIAIQAIMHYYKIEIKDLVILHDEKDFPVGKNQFKMNGSAAGHNGIKSVIQYLGTQNFNRYRIGIGQPEQGWKIIDWVLSKFKPEELENIILASKSISNFVNDWTKGTTFQNIMNLYN.

Tyr14 contacts tRNA. Catalysis depends on His19, which acts as the Proton acceptor. Positions 64, 66, and 112 each coordinate tRNA.

The protein belongs to the PTH family. In terms of assembly, monomer.

The protein localises to the cytoplasm. It catalyses the reaction an N-acyl-L-alpha-aminoacyl-tRNA + H2O = an N-acyl-L-amino acid + a tRNA + H(+). Functionally, hydrolyzes ribosome-free peptidyl-tRNAs (with 1 or more amino acids incorporated), which drop off the ribosome during protein synthesis, or as a result of ribosome stalling. Its function is as follows. Catalyzes the release of premature peptidyl moieties from peptidyl-tRNA molecules trapped in stalled 50S ribosomal subunits, and thus maintains levels of free tRNAs and 50S ribosomes. The sequence is that of Peptidyl-tRNA hydrolase from Mesoplasma florum (strain ATCC 33453 / NBRC 100688 / NCTC 11704 / L1) (Acholeplasma florum).